The sequence spans 416 residues: Tyrosine--tRNA ligase (416 aa).

Residue Tyr-37 coordinates L-tyrosine. The 'HIGH' region signature appears at 42–51; the sequence is PTADSLHVGN. L-tyrosine-binding residues include Tyr-176 and Gln-180. The short motif at 236–240 is the 'KMSKS' region element; the sequence is KMGKS. Lys-239 is a binding site for ATP. Residues 350–416 enclose the S4 RNA-binding domain; sequence LPAFRVFQEA…KKKHILLRPV (67 aa).

Belongs to the class-I aminoacyl-tRNA synthetase family. TyrS type 1 subfamily. As to quaternary structure, homodimer.

It is found in the cytoplasm. The enzyme catalyses tRNA(Tyr) + L-tyrosine + ATP = L-tyrosyl-tRNA(Tyr) + AMP + diphosphate + H(+). Catalyzes the attachment of tyrosine to tRNA(Tyr) in a two-step reaction: tyrosine is first activated by ATP to form Tyr-AMP and then transferred to the acceptor end of tRNA(Tyr). In Gluconobacter oxydans (strain 621H) (Gluconobacter suboxydans), this protein is Tyrosine--tRNA ligase.